The primary structure comprises 1603 residues: MEAVIKVISSACKTYCGKTSPSKKEIGAMLSLLQKEGLLMSPSDLYSPGSWDPITAALSQRAMVLGKSGELKTWGLVLGALKAAREEQVTSEQAKFWLGLGGGRVSPPGPECIEKPATERRIDKGEEVGETTVQRDAKMAPEETATPKTVGTSCYHCGTAIGCNCATASAPPPPYVGSGLYPSLAGVGEQQGQGGDTPRGAEQPRAEPGHAGLAPGPALTDWARIREELASTGPPVVAMPVVIKTEGPAWTPLEPKLITRLADTVRTKGLRSPITMAEVEALMSSPLLPHDVTNLMRVILGPAPYALWMDAWGVQLQTVIAAATRDPRHPANGQGRGERTNLDRLKGLADGMVGNPQGQAALLRPGELVAITASALQAFREVARLAEPAGPWADITQGPSESFVDFANRLIKAVEGSDLPPSARAPVIIDCFRQKSQPDIQQLIRAAPSTLTTPGEIIKYVLDRQKIAPLTDQGIAAAMSSAIQPLVMAVVNRERDGQTGSGGRARRLCYTCGSPGHYQAQCPKKRKSGNSRERCQLCDGMGHNAKQCRRRDSNQGQRPGRGLSSGPWPVSEQPAVSLAMTMEHKDRPLVRVILTNTGSHPVKQRSVYITALLDSGADITIISEEDWPTDWPVVDTANPQIHGIGGGIPMRKSRDMIELGVINRDGSLERPLLLFPAVAMVRGSILGRDCLQGLGLRLTNLVGRATVLTVALHLAIPLKWKPDHTPVWIDQWPLPEGKLVALTQLVEKELQLGHIEPSLSCWNTPVFVIRKASGSYRLLHDLRAVNAKLVPFGAVQQGAPVLSALPRGWPLMVLDLKDCFFSIPLAEQDREAFAFTLPSVNNQAPARRFQWKVLPQGMTCSPTICQLVVGQVLEPLRLKHPSLRMLHYMDDLLLAASSHDGLEAAGEEVINTLERAGFTISPDKIQREPGVQYLGYKLGSTYVAPVGLVAEPRIATLWDVQKLVGSLQWLRPALGIPPRLMGPFYEQLRGSDPNEAREWNLDMKMAWREIVQLSTTAALERWDPALPLEGAVVRCEQGAIGVLGQGLSTHPRPCLWLFSTQPTKAFTAWLEVLTLLITKLRASAVRTFGKEVDILLLPACFREDLPLPEGILLALRGFAGKIRSSDTPSIFDIARPLHVSLKVRVTDHPVPGPTVFTDASSSTHKGVVVWREGPRWEIKEIADLGASVQQLEARAVAMALLLWPTTPTNVVTDSAFVAKMLLKMGQEGVPSTAAAFILEDALSQRSAMAAVLHVRSHSEVPGFFTEGNDVADSQATFQAYPLREAKDLHTTLHIGPRALSKACNISMQQAREVVQTCPHCNSAPALEAGVNPRGLGPLQIWQTDFTLEPRMAPRSWLAVTVDTASSAIVVTQHGRVTSVAAQHHWATAIAVLGRPKAIKTDNGSCFTSKSTREWLARWGIAHTTGIPGNSQGQAMVERANRLLKDKIRVLAEGDGFMKRIPASKQGELLAKAMYALNHFERGENTKTPVQKHWRPTVLTEGPPVKIRIETGEWEKGWNVLVWGRGYAAVKNRDTDKVIWVPSRKVKPDITQKDEVTKKDEASPLFAGSSDWIPWGDEQEGLQEEAASNKQEGPGEDTLAANES.

The segment covering 128-141 has biased composition (basic and acidic residues); sequence VGETTVQRDAKMAP. Residues 128–150 are disordered; that stretch reads VGETTVQRDAKMAPEETATPKTV. Residues 172–175 carry the PPXY motif motif; it reads PPPY. Residues 180 to 184 carry the LYPX(n)L motif motif; sequence LYPSL. Residues 181–215 form a disordered region; that stretch reads YPSLAGVGEQQGQGGDTPRGAEQPRAEPGHAGLAP. The Nuclear export signal motif lies at 219–229; the sequence is LTDWARIREEL. CCHC-type zinc fingers lie at residues 507–524 and 533–550; these read RLCYTCGSPGHYQAQCPK and ERCQLCDGMGHNAKQCRR. The segment at 544 to 571 is disordered; the sequence is NAKQCRRRDSNQGQRPGRGLSSGPWPVS. Residues 609–690 form the Peptidase A2 domain; that stretch reads ITALLDSGAD…VRGSILGRDC (82 aa). Asp614 acts as the For protease activity; shared with dimeric partner in catalysis. A Reverse transcriptase domain is found at 750-938; it reads LQLGHIEPSL…PGVQYLGYKL (189 aa). Asp815, Asp890, Asp891, Asp1158, Glu1192, Asp1213, and Asp1272 together coordinate Mg(2+). The 132-residue stretch at 1149–1280 folds into the RNase H type-1 domain; it reads PVPGPTVFTD…ADSQATFQAY (132 aa). The segment at 1280 to 1321 adopts an Integrase-type zinc-finger fold; the sequence is YPLREAKDLHTTLHIGPRALSKACNISMQQAREVVQTCPHCN. The Zn(2+) site is built by His1289, His1293, Cys1317, and Cys1320. In terms of domain architecture, Integrase catalytic spans 1333–1496; it reads RGLGPLQIWQ…TPVQKHWRPT (164 aa). Residues Asp1344, Asp1401, and Glu1437 each coordinate Mg(2+). The segment at residues 1502 to 1550 is a DNA-binding region (integrase-type); the sequence is PPVKIRIETGEWEKGWNVLVWGRGYAAVKNRDTDKVIWVPSRKVKPDIT. The interval 1548–1567 is involved in homooctamerization; that stretch reads DITQKDEVTKKDEASPLFAG. A compositionally biased stretch (basic and acidic residues) spans 1549 to 1561; the sequence is ITQKDEVTKKDEA. The segment at 1549–1603 is disordered; sequence ITQKDEVTKKDEASPLFAGSSDWIPWGDEQEGLQEEAASNKQEGPGEDTLAANES.

Active as a homodimer. In terms of assembly, homodimer. Homomultimer. Homohexamer. As to quaternary structure, homodimer; further associates as a homooctamer. Heterodimer of alpha and beta subunits. Three forms of RT exist: alpha-alpha (alpha-Pol), beta-beta (beta-Pol), and alpha-beta, with the major form being the heterodimer. Both the polymerase and RNase H active sites are located in the alpha subunit of heterodimeric RT alpha-beta. Mg(2+) is required as a cofactor. It depends on Mn(2+) as a cofactor. Specific enzymatic cleavages in vivo yield mature proteins. Post-translationally, capsid protein p27: The cleavage at the C-terminus is slowly trimmed by the viral protease, sometimes being cut internally thereby generating the short version of the capsid protein and a capsid protein C-terminally extended by 3 amino acids in a ratio of 2:1.

The protein localises to the virion. The enzyme catalyses DNA(n) + a 2'-deoxyribonucleoside 5'-triphosphate = DNA(n+1) + diphosphate. The catalysed reaction is Endonucleolytic cleavage to 5'-phosphomonoester.. Capsid protein p27: Self-associates to form the irregular polyhedron core composed of hexamers and pentamers, that encapsulates the genomic RNA-nucleocapsid complex. Assembles as a tube in vitro. Binds to inositol hexakisphosphate (IP6), which allows the assembly of the polyhedral capsid. Functionally, plays a role in the oligomerization of the Gag polyprotein and in the stabilization of the immature particle. Essential layering element during tube assembly. Allows the cooperative binging of Gag to the host plasma membrane. In terms of biological role, binds strongly to viral nucleic acids and promotes their packaging. Plays a role in the maturation-stabilization of the viral dimeric RNA via highly structured zinc-binding motifs. Its function is as follows. The aspartyl protease mediates proteolytic cleavages of Gag and Gag-Pol polyproteins during or shortly after the release of the virion from the plasma membrane. Cleavages take place as an ordered, step-wise cascade to yield mature proteins. This process is called maturation. Displays maximal activity during the budding process just prior to particle release from the cell. Catalyzes viral DNA integration into the host chromosome, by performing a series of DNA cutting and joining reactions. This recombination event is an essential step in the viral replication cycle. Has a strong preference for using the 3'-OH at the viral DNA end as a nucleophile. This is Gag-Pol polyprotein (gag-pol) from Rous sarcoma virus subgroup B (strain Schmidt-Ruppin) (RSV-SR-B).